The following is a 278-amino-acid chain: Putative glycosyltransferase EpsE (278 aa).

This sequence belongs to the glycosyltransferase 2 family.

Functionally, may be involved in the production of the exopolysaccharide (EPS) component of the extracellular matrix during biofilm formation. EPS is responsible for the adhesion of chains of cells into bundles. Required for biofilm maintenance. In Bacillus subtilis (strain 168), this protein is Putative glycosyltransferase EpsE (epsE).